Consider the following 290-residue polypeptide: MRRPAAVPLLLLLCFGSQRAKAATACGRPRMLNRMVGGQDTQEGEWPWQVSIQRNGSHFCGGSLIAEQWVLTAAHCFRNTSETSLYQVLLGARQLVQPGPHAMYARVRQVESNPLYQGTASSADVALVELEAPVPFTNYILPVCLPDPSVIFETGMNCWVTGWGSPSEEDLLPEPRILQKLAVPIIDTPKCNLLYSKDTEFGYQPKTIKNDMLCAGFEEGKKDACKGDSGGPLVCLVGQSWLQAGVISWGEGCARQNRPGVYIRVTAHHNWIHRIIPKLQFQPARLGGQK.

The N-terminal stretch at 1–22 (MRRPAAVPLLLLLCFGSQRAKA) is a signal peptide. A propeptide spans 23-34 (ATACGRPRMLNR) (activation peptide). Residues 35–277 (MVGGQDTQEG…HHNWIHRIIP (243 aa)) enclose the Peptidase S1 domain. Asn-55 carries an N-linked (GlcNAc...) asparagine glycan. Cys-60 and Cys-76 form a disulfide bridge. The active-site Charge relay system is the His-75. Asn-79 carries N-linked (GlcNAc...) asparagine glycosylation. Catalysis depends on Asp-124, which acts as the Charge relay system. 3 cysteine pairs are disulfide-bonded: Cys-158/Cys-235, Cys-191/Cys-214, and Cys-225/Cys-253. The active-site Charge relay system is the Ser-229.

This sequence belongs to the peptidase S1 family. In terms of processing, N-glycosylated. Expressed predominantly in the pancreas.

Its subcellular location is the secreted. The sequence is that of Serine protease 27 (PRSS27) from Homo sapiens (Human).